Reading from the N-terminus, the 350-residue chain is MNILADALLPGLDSAFPPPFTVTLYHKADEIPELLHYKDVLLCRSTLKINGDLLKNHQIKFVATATSGTDHIDFPFLESQNISIIDAKGCNAISVADYVVACLAYLDKQQLIQGKTAGIIGLGQVGTKVYERLNAAEFQLCLYDPPKATRDTSFQSCSLEDLFECDLLCVHAELHSDAPYPSLNLINRDFLKELKPGCIIINASRGGIVNEEALLHLGSAILYCTDVYNNEPHIDSRIVSKATLCTPHIAGHSLEAKFAAVAIVSRKLHQMLGLPYPQFATPEKPYRLNENSDWRELALSIYNPIHETLELKHAGNLSSAFLTLRKNHHHRHDFTTYFDSDSIKKYPLLG.

2 residues coordinate substrate: Ser-45 and Thr-66. Residues 124 to 125, Asp-144, 203 to 205, and Asp-226 contribute to the NAD(+) site; these read QV and ASR. Arg-205 is an active-site residue. Glu-231 is a catalytic residue. The active-site Proton donor is the His-248. Gly-251 serves as a coordination point for NAD(+).

Belongs to the D-isomer specific 2-hydroxyacid dehydrogenase family. PdxB subfamily. As to quaternary structure, homodimer.

The protein resides in the cytoplasm. It catalyses the reaction 4-phospho-D-erythronate + NAD(+) = (R)-3-hydroxy-2-oxo-4-phosphooxybutanoate + NADH + H(+). The protein operates within cofactor biosynthesis; pyridoxine 5'-phosphate biosynthesis; pyridoxine 5'-phosphate from D-erythrose 4-phosphate: step 2/5. Its function is as follows. Catalyzes the oxidation of erythronate-4-phosphate to 3-hydroxy-2-oxo-4-phosphonooxybutanoate. The protein is Erythronate-4-phosphate dehydrogenase of Legionella pneumophila subsp. pneumophila (strain Philadelphia 1 / ATCC 33152 / DSM 7513).